A 206-amino-acid polypeptide reads, in one-letter code: Small ribosomal subunit protein uS4 (206 aa).

The S4 RNA-binding domain occupies 96-156 (SRLDNVVYRM…EKSRNQSRIA (61 aa)).

It belongs to the universal ribosomal protein uS4 family. In terms of assembly, part of the 30S ribosomal subunit. Contacts protein S5. The interaction surface between S4 and S5 is involved in control of translational fidelity.

Its function is as follows. One of the primary rRNA binding proteins, it binds directly to 16S rRNA where it nucleates assembly of the body of the 30S subunit. Functionally, with S5 and S12 plays an important role in translational accuracy. This chain is Small ribosomal subunit protein uS4, found in Hydrogenovibrio crunogenus (strain DSM 25203 / XCL-2) (Thiomicrospira crunogena).